The chain runs to 52 residues: Light-harvesting protein B-870 alpha chain (52 aa).

Residues 1 to 15 are Cytoplasmic-facing; sequence MAKFYKIWLIFDPRR. The helical transmembrane segment at 16 to 36 threads the bilayer; the sequence is VFVAQGVFLFLLAAMIHLVVL. His32 is a binding site for a bacteriochlorophyll. The Periplasmic segment spans residues 37–52; the sequence is SSGLNWFEAAAAVGGQ.

The protein belongs to the antenna complex alpha subunit family. The core complex is formed by different alpha and beta chains, binding bacteriochlorophyll molecules, and arranged most probably in tetrameric structures disposed around the reaction center. The non-pigmented gamma chains may constitute additional components.

It localises to the cell inner membrane. Functionally, antenna complexes are light-harvesting systems, which transfer the excitation energy to the reaction centers. The chain is Light-harvesting protein B-870 alpha chain (pufA) from Roseobacter denitrificans (strain ATCC 33942 / OCh 114) (Erythrobacter sp. (strain OCh 114)).